A 699-amino-acid chain; its full sequence is Nucleolar and coiled-body phosphoprotein 1 (699 aa).

The 33-residue stretch at 10–42 (VPSDLYPLVLGFLRDNQLSEVANKFAKATGATQ) folds into the LisH domain. Lys33 carries the post-translational modification N6-acetyllysine. The tract at residues 65–637 (ERKLQANGPV…VREEEIEVDS (573 aa)) is disordered. Residues Lys67 and Lys76 each participate in a glycyl lysine isopeptide (Lys-Gly) (interchain with G-Cter in SUMO2) cross-link. An Acidic serine cluster 1 repeat occupies 84 to 95 (SSDSEDSSEEEE). The tract at residues 84-566 (SSDSEDSSEE…GKAAKNSEEE (483 aa)) is 11 X 12 AA approximate repeats of an acidic serine cluster. Residues 86-97 (DSEDSSEEEEEV) are compositionally biased toward acidic residues. 3 positions are modified to phosphoserine: Ser87, Ser90, and Ser91. Ser91 bears the Diphosphoserine mark. Residues 100–110 (PPAKKAAVPAK) show a composition bias toward low complexity. An Acidic serine cluster 2 repeat occupies 125-136 (ESSSSEESSDDD). The segment covering 144–159 (QPVQKGVKPQAKAAKA) has biased composition (low complexity). One copy of the Acidic serine cluster 3 repeat lies at 167–178 (SDSDSDSSSEDE). Residue Lys186 forms a Glycyl lysine isopeptide (Lys-Gly) (interchain with G-Cter in SUMO2) linkage. Thr188 is subject to Phosphothreonine. Lys193 is covalently cross-linked (Glycyl lysine isopeptide (Lys-Gly) (interchain with G-Cter in SUMO2)). 2 stretches are compositionally biased toward low complexity: residues 193–227 (KAQT…SSSS) and 236–261 (AATP…TTPT). Residues 204 to 382 (RAAPKIANGK…DDEAPSKPAG (179 aa)) are interaction with RPA194. Residues 221 to 232 (SSSSSSSDDSEE) form an Acidic serine cluster 4 repeat. One copy of the Acidic serine cluster 5 repeat lies at 264-275 (SSSSEDSSSDEE). Residues 291–301 (SVPPPSAPPPK) are compositionally biased toward pro residues. Over residues 321-333 (SSEDSSDESDSSS) the composition is skewed to acidic residues. The stretch at 325–336 (SSDESDSSSEEE) is one Acidic serine cluster 6 repeat. Glycyl lysine isopeptide (Lys-Gly) (interchain with G-Cter in SUMO2) cross-links involve residues Lys342 and Lys347. 3 positions are modified to phosphoserine: Ser362, Ser363, and Ser366. Residues 363–375 (SDSSDSDSSEDDE) form an Acidic serine cluster 7 repeat. The segment covering 366-375 (SDSDSSEDDE) has biased composition (acidic residues). Residues 381–397 (AGTTKNSSNKPAVTTKS) show a composition bias toward polar residues. Glycyl lysine isopeptide (Lys-Gly) (interchain with G-Cter in SUMO2) cross-links involve residues Lys390 and Lys396. Ser397 bears the Phosphoserine mark. Residues 398 to 409 (PAVKPAAAPKQP) are compositionally biased toward low complexity. Residues Lys401 and Lys407 each participate in a glycyl lysine isopeptide (Lys-Gly) (interchain with G-Cter in SUMO2) cross-link. Lys415 carries the post-translational modification N6-acetyllysine; alternate. A Glycyl lysine isopeptide (Lys-Gly) (interchain with G-Cter in SUMO1); alternate cross-link involves residue Lys415. A Glycyl lysine isopeptide (Lys-Gly) (interchain with G-Cter in SUMO2); alternate cross-link involves residue Lys415. One copy of the Acidic serine cluster 8 repeat lies at 425-436 (SSEEESSSSEEE). Glycyl lysine isopeptide (Lys-Gly) (interchain with G-Cter in SUMO2) cross-links involve residues Lys440 and Lys452. 2 stretches are compositionally biased toward low complexity: residues 441–476 (MVAT…SDSS) and 498–523 (AGGA…SSSD). Ser456 is modified (phosphoserine). An Acidic serine cluster 9 repeat occupies 470 to 481 (SSDSDSSSSEEE). Lys505 is covalently cross-linked (Glycyl lysine isopeptide (Lys-Gly) (interchain with G-Cter in SUMO2)). Residue Ser508 is modified to Phosphoserine. The stretch at 519-529 (SSSSDDSSEEE) is one Acidic serine cluster 10 repeat. Ser538 carries the phosphoserine modification. Residues 547–556 (NGTSALTAQN) are compositionally biased toward polar residues. The Acidic serine cluster 11 repeat unit spans residues 555 to 566 (QNGKAAKNSEEE). Ser563 bears the Phosphoserine mark. Lys572 participates in a covalent cross-link: Glycyl lysine isopeptide (Lys-Gly) (interchain with G-Cter in SUMO1). Lys579 is covalently cross-linked (Glycyl lysine isopeptide (Lys-Gly) (interchain with G-Cter in SUMO2)). Residues Ser580 and Ser582 each carry the phosphoserine modification. Lys604 participates in a covalent cross-link: Glycyl lysine isopeptide (Lys-Gly) (interchain with G-Cter in SUMO2). 2 positions are modified to phosphothreonine: Thr607 and Thr610. A Glycyl lysine isopeptide (Lys-Gly) (interchain with G-Cter in SUMO2) cross-link involves residue Lys613. Phosphoserine is present on Ser622. Residues 627–637 (RVREEEIEVDS) are compositionally biased toward basic and acidic residues. The residue at position 643 (Ser643) is a Phosphoserine. Lys647 is covalently cross-linked (Glycyl lysine isopeptide (Lys-Gly) (interchain with G-Cter in SUMO2)). Lys663 carries the post-translational modification N6-acetyllysine; alternate. Lys663 participates in a covalent cross-link: Glycyl lysine isopeptide (Lys-Gly) (interchain with G-Cter in SUMO2); alternate. Arg683 is modified (omega-N-methylarginine). Ser686 is subject to Phosphoserine. Lys695 participates in a covalent cross-link: Glycyl lysine isopeptide (Lys-Gly) (interchain with G-Cter in SUMO2). Ser698 bears the Phosphoserine mark.

The protein belongs to the NOLC1 family. As to quaternary structure, heterodimer; heterodimerizes with TCOF1 following monoubiquitination. Interacts with RNA polymerase I 194 kDa subunit (RPA194) and with casein kinase-II. Interacts with DKC1/NAP57, NOP58 and fibrillarin. Post-translationally, undergoes rapid and massive phosphorylation/dephosphorylation cycles on CK2 and PKC sites. NOLC1 is one of the mostly phosphorylated proteins in the cell. Ubiquitinated. Monoubiquitination by the BCR(KBTBD8) complex promotes the formation of a NOLC1-TCOF1 complex that acts as a platform to connect RNA polymerase I with enzymes responsible for ribosomal processing and modification, leading to remodel the translational program of differentiating cells in favor of neural crest specification. In terms of processing, pyrophosphorylated by 5-diphosphoinositol pentakisphosphate (5-IP7). Serine pyrophosphorylation is achieved by Mg(2+)-dependent, but enzyme independent transfer of a beta-phosphate from a inositol pyrophosphate to a pre-phosphorylated serine residue.

It is found in the nucleus. The protein resides in the nucleolus. Its subcellular location is the cytoplasm. Nucleolar protein that acts as a regulator of RNA polymerase I by connecting RNA polymerase I with enzymes responsible for ribosomal processing and modification. Required for neural crest specification: following monoubiquitination by the BCR(KBTBD8) complex, associates with TCOF1 and acts as a platform to connect RNA polymerase I with enzymes responsible for ribosomal processing and modification, leading to remodel the translational program of differentiating cells in favor of neural crest specification. Involved in nucleologenesis, possibly by playing a role in the maintenance of the fundamental structure of the fibrillar center and dense fibrillar component in the nucleolus. It has intrinsic GTPase and ATPase activities. In Homo sapiens (Human), this protein is Nucleolar and coiled-body phosphoprotein 1.